The following is a 78-amino-acid chain: MTEAEIRDKVYDIIVSKMGVNKDQIKPESKFSDDLGADSLDTVELIMELENEFDVQIPDEDAEKIGTVQQAIDYIVKK.

In terms of domain architecture, Carrier spans A4–K78. S39 carries the post-translational modification O-(pantetheine 4'-phosphoryl)serine.

Belongs to the acyl carrier protein (ACP) family. 4'-phosphopantetheine is transferred from CoA to a specific serine of apo-ACP by AcpS. This modification is essential for activity because fatty acids are bound in thioester linkage to the sulfhydryl of the prosthetic group.

It localises to the cytoplasm. The protein operates within lipid metabolism; fatty acid biosynthesis. Functionally, carrier of the growing fatty acid chain in fatty acid biosynthesis. This chain is Acyl carrier protein, found in Chlorobium luteolum (strain DSM 273 / BCRC 81028 / 2530) (Pelodictyon luteolum).